The following is a 602-amino-acid chain: MALSFFSGGGSASYAKYFDIRLDEGYIVFRGGEQEAASAQLSGKLLLCLSEPLAAKHVRLNLTGISRVCWHLPSGSASGSRKSWREKVFYEKTWTFRDAGKSKTEVLAAGNYEFPFHVILEGSMPESVEGLSDTYVTYRFKAEIGRKYAKDIVVRKPLRIIRTLESSALELSHAMSVENIWPNKIEYSISTPTKAVIFGTSLRVDFKLIPLLKGLKIGQIVSQLIESHDLTLNPEDPDSIRNTYKSTRTIVSDEYELDDEGSLEIIDEEAEGYQFSRYLDLPKTLTRCLQDTDTRGIKIRHKLKFRVQLLNPDGHISELRATLPVSIFISPNLAIDENNNLVDQTPQTARRAVDDIAQQAPPLYGEHQFDQLYSEVDPSGYRTPGPGSGPGTPFGALSRNISSENLASMNALTSTDLSVSALQTRLSNLHASRFSNPSPTEIDNHADSEQRRLGISTADYFGPSSGSNSHSPASPELSRRPSDEGYRDHDHIPSGMATPFHPQYAEVETLSRVPSYSTAMRSTVRPCDSELPDYQAVVAEDTAMPALQSPQQAYIRSAGRGTSMNTGIDVHQLRSGHFSSRTSNSHDEEDRRLRLVQARARV.

Disordered stretches follow at residues 375–398 (EVDP…GALS) and 457–499 (TADY…MATP). The segment covering 463–475 (PSSGSNSHSPASP) has biased composition (low complexity). Residues 477 to 492 (LSRRPSDEGYRDHDHI) are compositionally biased toward basic and acidic residues.

The protein belongs to the arrestin family. As to quaternary structure, interacts with hulA.

Component of the regulatory network controlling carbon source utilization through ubiquitination and deubiquitination involving creA, creB, creC, creD and acrB. May be involved in signaling by recognizing appropriately phosphorylated substrates via its arrestin domains and then recruit a HECT-type ubiquitin ligase such as hulA, leading to ubiquitination of the substrate, providing a link between ubiquitination and phosphorylation in protein regulation and stability. The protein is Probable HECT-type ubiquitin ligase-interacting protein creD (creD) of Aspergillus clavatus (strain ATCC 1007 / CBS 513.65 / DSM 816 / NCTC 3887 / NRRL 1 / QM 1276 / 107).